A 423-amino-acid polypeptide reads, in one-letter code: Probable WRKY transcription factor 58 (423 aa).

Disordered regions lie at residues 91 to 128 (SSAH…AVHG), 142 to 171 (RNHY…DGYN), and 215 to 284 (IYKG…GVST). Low complexity-rich tracts occupy residues 99–111 (QPRQ…PQRP) and 144–162 (HYNN…VVNV). Residues 161-225 (NVDKPADDGY…YKGQHDHERP (65 aa)) constitute a DNA-binding region (WRKY 1). A compositionally biased stretch (acidic residues) spans 259 to 271 (DDDDDDDEDDEDL). The segment at residues 300–365 (SEVDLLDDGY…YEGKHNHDVP (66 aa)) is a DNA-binding region (WRKY 2).

The protein localises to the nucleus. Transcription factor. Interacts specifically with the W box (5'-(T)TGAC[CT]-3'), a frequently occurring elicitor-responsive cis-acting element. The protein is Probable WRKY transcription factor 58 (WRKY58) of Arabidopsis thaliana (Mouse-ear cress).